A 203-amino-acid polypeptide reads, in one-letter code: Na(+)-translocating NADH-quinone reductase subunit E (203 aa).

The next 6 helical transmembrane spans lie at 12-32 (AVFV…FLAL), 36-56 (MEAA…TVPV), 82-102 (FLGL…LEMV), 115-135 (GVFL…LFMV), 145-165 (LVYG…LAGI), and 181-201 (LGIT…FSGI).

It belongs to the NqrDE/RnfAE family. In terms of assembly, composed of six subunits; NqrA, NqrB, NqrC, NqrD, NqrE and NqrF.

It is found in the cell inner membrane. The catalysed reaction is a ubiquinone + n Na(+)(in) + NADH + H(+) = a ubiquinol + n Na(+)(out) + NAD(+). NQR complex catalyzes the reduction of ubiquinone-1 to ubiquinol by two successive reactions, coupled with the transport of Na(+) ions from the cytoplasm to the periplasm. NqrA to NqrE are probably involved in the second step, the conversion of ubisemiquinone to ubiquinol. The protein is Na(+)-translocating NADH-quinone reductase subunit E of Hahella chejuensis (strain KCTC 2396).